We begin with the raw amino-acid sequence, 185 residues long: Large ribosomal subunit protein uL5 (185 aa).

It belongs to the universal ribosomal protein uL5 family. As to quaternary structure, part of the 50S ribosomal subunit; part of the 5S rRNA/L5/L18/L25 subcomplex. Contacts the 5S rRNA and the P site tRNA. Forms a bridge to the 30S subunit in the 70S ribosome.

This is one of the proteins that bind and probably mediate the attachment of the 5S RNA into the large ribosomal subunit, where it forms part of the central protuberance. In the 70S ribosome it contacts protein S13 of the 30S subunit (bridge B1b), connecting the 2 subunits; this bridge is implicated in subunit movement. Contacts the P site tRNA; the 5S rRNA and some of its associated proteins might help stabilize positioning of ribosome-bound tRNAs. The sequence is that of Large ribosomal subunit protein uL5 from Bacteroides fragilis (strain ATCC 25285 / DSM 2151 / CCUG 4856 / JCM 11019 / LMG 10263 / NCTC 9343 / Onslow / VPI 2553 / EN-2).